A 437-amino-acid chain; its full sequence is Bystin (437 aa).

The disordered stretch occupies residues 1–105 (MPKFKAARGV…DGSDDEDEEW (105 aa)). Arginine 40 bears the Omega-N-methylarginine mark. Position 55 is a phosphoserine (serine 55). Positions 71-87 (AEHGTGDKPAAPRERTT) are enriched in basic and acidic residues. Position 98 is a phosphoserine (serine 98). A Phosphothreonine modification is found at threonine 156. Phosphoserine is present on residues serine 167 and serine 414.

This sequence belongs to the bystin family. In terms of assembly, binds trophinin, tastin and cytokeratins. In terms of tissue distribution, found in the placenta from the sixth week of pregnancy. Was localized in the cytoplasm of the syncytiotrophoblast in the chorionic villi and in endometrial decidual cells at the uteroplacental interface. After week 10, the level decreased and then disappeared from placental villi.

It localises to the cytoplasm. Its subcellular location is the nucleus. The protein resides in the nucleolus. Its function is as follows. Required for processing of 20S pre-rRNA precursor and biogenesis of 40S ribosomal subunits. May be required for trophinin-dependent regulation of cell adhesion during implantation of human embryos. This Homo sapiens (Human) protein is Bystin.